The following is a 193-amino-acid chain: dCTP deaminase (193 aa).

DCTP is bound by residues 110–115, Asp-128, 136–138, Tyr-171, Lys-178, and Gln-182; these read RSSLAR and VLE. Glu-138 serves as the catalytic Proton donor/acceptor.

The protein belongs to the dCTP deaminase family. Homotrimer.

It carries out the reaction dCTP + H2O + H(+) = dUTP + NH4(+). It functions in the pathway pyrimidine metabolism; dUMP biosynthesis; dUMP from dCTP (dUTP route): step 1/2. Its function is as follows. Catalyzes the deamination of dCTP to dUTP. In Escherichia coli (strain K12 / MC4100 / BW2952), this protein is dCTP deaminase.